We begin with the raw amino-acid sequence, 754 residues long: 5-methyltetrahydropteroyltriglutamate--homocysteine methyltransferase (754 aa).

Residues 17 to 20 and K117 contribute to the 5-methyltetrahydropteroyltri-L-glutamate site; that span reads RELK. L-homocysteine is bound by residues 431–433 and E484; that span reads IGS. L-methionine contacts are provided by residues 431-433 and E484; that span reads IGS. Residues 515–516 and W561 each bind 5-methyltetrahydropteroyltri-L-glutamate; that span reads RC. L-homocysteine is bound at residue D599. L-methionine is bound at residue D599. E605 is a 5-methyltetrahydropteroyltri-L-glutamate binding site. Positions 641, 643, and 665 each coordinate Zn(2+). H694 functions as the Proton donor in the catalytic mechanism. C726 contributes to the Zn(2+) binding site.

The protein belongs to the vitamin-B12 independent methionine synthase family. Zn(2+) serves as cofactor.

It catalyses the reaction 5-methyltetrahydropteroyltri-L-glutamate + L-homocysteine = tetrahydropteroyltri-L-glutamate + L-methionine. It participates in amino-acid biosynthesis; L-methionine biosynthesis via de novo pathway; L-methionine from L-homocysteine (MetE route): step 1/1. In terms of biological role, catalyzes the transfer of a methyl group from 5-methyltetrahydrofolate to homocysteine resulting in methionine formation. This Salmonella agona (strain SL483) protein is 5-methyltetrahydropteroyltriglutamate--homocysteine methyltransferase.